We begin with the raw amino-acid sequence, 153 residues long: Proline-rich membrane anchor 1 (153 aa).

The first 35 residues, 1 to 35 (MLLRDLVPRHGCCWPSLLLHCALHPLWGLVQVTHA), serve as a signal peptide directing secretion. The Extracellular portion of the chain corresponds to 36–92 (EPQKSCSKVTDSCQHICQCRPPPPLPPPPPPPPPPRLLSAPAPNSTSCPAEDSWWSG). The PRAD domain occupies 56–70 (PPPPLPPPPPPPPPP). The span at 59–71 (PLPPPPPPPPPPR) shows a compositional bias: pro residues. The interval 59 to 79 (PLPPPPPPPPPPRLLSAPAPN) is disordered. An N-linked (GlcNAc...) asparagine glycan is attached at N79. Residues 93–113 (LVIIVAVVCASLVFLTVLVII) traverse the membrane as a helical segment. At 114-153 (CYKAIKRKPLRKDENGTSVAEYPMSSSQSHKGVDVNAAVV) the chain is on the cytoplasmic side. Positions 129–153 (GTSVAEYPMSSSQSHKGVDVNAAVV) are disordered.

Interacts with ACHE, probably through disulfide bonds. As to expression, predominantly expressed in the central nervous system, including in the brain. Also expressed in muscle, heart and kidney. Isoform 1 may be predominant in the cortex and striatum, while isoform 2 is more abundant in the cerebellum.

It is found in the cell membrane. Its subcellular location is the cell junction. The protein localises to the synapse. Required to anchor acetylcholinesterase (ACHE) to the basal lamina of the neuromuscular junction and to the membrane of neuronal synapses in brain. Also able to organize ACHE into tetramers. This Mus musculus (Mouse) protein is Proline-rich membrane anchor 1 (Prima1).